Here is a 434-residue protein sequence, read N- to C-terminus: [Pyruvate dehydrogenase (acetyl-transferring)] kinase isozyme 1, mitochondrial (434 aa).

The N-terminal 26 residues, 1 to 26, are a transit peptide targeting the mitochondrion; the sequence is MRLARLLRGGTSVRPLCAVPCASRSL. Phosphotyrosine; by FGFR1 is present on Tyr136. The region spanning 161–391 is the Histidine kinase domain; it reads TEYKESFGVD…DAVIYIKALS (231 aa). A Phosphotyrosine; by FGFR1, ABL1, FLT3 and JAK2 modification is found at Tyr241. Tyr242 is subject to Phosphotyrosine; by FGFR1. ATP contacts are provided by residues 277–284, Asp316, 335–336, and 352–357; these read ELFKNAMR, ST, and GFGYGL. Thr336 is subject to Phosphothreonine. The residue at position 403 (Lys403) is an N6-succinyllysine.

The protein belongs to the PDK/BCKDK protein kinase family. As to quaternary structure, homodimer, and heterodimer with PDK2. Interacts with the pyruvate dehydrogenase complex subunit DLAT, and is part of the multimeric pyruvate dehydrogenase complex that contains multiple copies of pyruvate dehydrogenase (E1), dihydrolipoamide acetyltransferase (DLAT, E2) and lipoamide dehydrogenase (DLD, E3). Interacts with phosphoglycerate kinase PGK1; the interaction is direct, occurs under hypoxic conditions and leads to PDK1-mediated inhibition of pyruvate dehydrogenase complex activity. Phosphorylated by constitutively activated ABL1, FGFR1, FLT3 and JAK2 (in vitro), and this may also occur in cancer cells that express constitutively activated ABL1, FGFR1, FLT3 and JAK2. Phosphorylation at Tyr-241 and Tyr-242 strongly increases kinase activity, while phosphorylation at Tyr-136 has a lesser effect. Phosphorylated under hypoxic conditions at Thr-336 by phosphoglycerate kinase PGK1 which has an activating effect. In terms of tissue distribution, detected in pancreas islets (at protein level). Expressed predominantly in the heart.

The protein localises to the mitochondrion matrix. It carries out the reaction L-seryl-[pyruvate dehydrogenase E1 alpha subunit] + ATP = O-phospho-L-seryl-[pyruvate dehydrogenase E1 alpha subunit] + ADP + H(+). Activated by binding to the pyruvate dehydrogenase complex subunit DLAT. Strongly activated by NADH plus acetyl-coenzyme A. Inhibited by dichloroacetate. In terms of biological role, kinase that plays a key role in regulation of glucose and fatty acid metabolism and homeostasis via phosphorylation of the pyruvate dehydrogenase subunits PDHA1 and PDHA2. This inhibits pyruvate dehydrogenase activity, and thereby regulates metabolite flux through the tricarboxylic acid cycle, down-regulates aerobic respiration and inhibits the formation of acetyl-coenzyme A from pyruvate. Plays an important role in cellular responses to hypoxia and is important for cell proliferation under hypoxia. This chain is [Pyruvate dehydrogenase (acetyl-transferring)] kinase isozyme 1, mitochondrial (Pdk1), found in Rattus norvegicus (Rat).